The following is a 769-amino-acid chain: Serine protease HtrA-like (769 aa).

A compositionally biased stretch (basic residues) spans 1 to 20; the sequence is MDIGKKHVIPKSQYRRKRRE. The tract at residues 1-390 is disordered; sequence MDIGKKHVIP…ATSKLNKGRA (390 aa). Composition is skewed to basic and acidic residues over residues 21–64 and 71–108; these read FFHN…ERFK and LEQRNRDVNENKAEESKSNQDSKSAYNRDHYLTDDVSK. Residues 126-137 are compositionally biased toward polar residues; the sequence is YEQNSEATLSTK. Positions 138–186 are enriched in basic and acidic residues; that stretch reads STDKVESTEMRKLSSDKNKVGHEEQHVLSKPSEHDKETRIDSESSRTDS. A compositionally biased stretch (polar residues) spans 247-262; the sequence is QQSQNEQTKTYTYGDS. 2 stretches are compositionally biased toward basic and acidic residues: residues 264–296 and 310–330; these read QNDKSNHENDLSHHIPSISDDKDNVMRENHIVD and KTDDDRKLDEKIHVEDKHKQN. The segment covering 331-347 has biased composition (polar residues); that stretch reads ADSSETVGYQSQSTASH. The segment covering 348-364 has biased composition (basic and acidic residues); sequence RSTEKRNISINDHDKLN. The segment covering 365–390 has biased composition (polar residues); that stretch reads GQKTNTKTSANNNQKKATSKLNKGRA. A helical membrane pass occupies residues 410-430; the sequence is LVILMGIIILIVILNAIFNNV. Active-site charge relay system residues include histidine 504, aspartate 534, and serine 619. The region spanning 680–733 is the PDZ domain; it reads IVSLNSFERQAVKLPGKVKNGVVVDQVDNNGLADQSGLKKGDVITELDGKLLED.

It belongs to the peptidase S1C family.

It localises to the cell membrane. The polypeptide is Serine protease HtrA-like (Staphylococcus aureus (strain NCTC 8325 / PS 47)).